Reading from the N-terminus, the 451-residue chain is UPF0210 protein CLH_1879 (451 aa).

It belongs to the UPF0210 family. As to quaternary structure, homodimer.

This is UPF0210 protein CLH_1879 from Clostridium botulinum (strain Alaska E43 / Type E3).